We begin with the raw amino-acid sequence, 103 residues long: Small integral membrane protein 32 (103 aa).

The chain crosses the membrane as a helical span at residues 55 to 75 (YLLLFFLLLLSVALVVLFIGC).

Its subcellular location is the membrane. In Homo sapiens (Human), this protein is Small integral membrane protein 32.